Reading from the N-terminus, the 138-residue chain is Putative pre-16S rRNA nuclease (138 aa).

It belongs to the YqgF nuclease family.

Its subcellular location is the cytoplasm. Its function is as follows. Could be a nuclease involved in processing of the 5'-end of pre-16S rRNA. The sequence is that of Putative pre-16S rRNA nuclease from Citrobacter koseri (strain ATCC BAA-895 / CDC 4225-83 / SGSC4696).